Consider the following 301-residue polypeptide: Epimerase family protein Mb2239 (301 aa).

The protein belongs to the NAD(P)-dependent epimerase/dehydratase family. SDR39U1 subfamily.

This chain is Epimerase family protein Mb2239, found in Mycobacterium bovis (strain ATCC BAA-935 / AF2122/97).